The sequence spans 159 residues: 2-C-methyl-D-erythritol 2,4-cyclodiphosphate synthase (159 aa).

Positions 8 and 10 each coordinate a divalent metal cation. 4-CDP-2-C-methyl-D-erythritol 2-phosphate contacts are provided by residues 8 to 10 (DVH) and 34 to 35 (HS). Residue His-42 participates in a divalent metal cation binding. Residues 56–58 (DIG), 61–65 (FPDTD), 100–106 (AQAPKML), 132–135 (TTTE), Phe-139, and Arg-142 each bind 4-CDP-2-C-methyl-D-erythritol 2-phosphate.

The protein belongs to the IspF family. As to quaternary structure, homotrimer. Requires a divalent metal cation as cofactor.

It catalyses the reaction 4-CDP-2-C-methyl-D-erythritol 2-phosphate = 2-C-methyl-D-erythritol 2,4-cyclic diphosphate + CMP. It participates in isoprenoid biosynthesis; isopentenyl diphosphate biosynthesis via DXP pathway; isopentenyl diphosphate from 1-deoxy-D-xylulose 5-phosphate: step 4/6. In terms of biological role, involved in the biosynthesis of isopentenyl diphosphate (IPP) and dimethylallyl diphosphate (DMAPP), two major building blocks of isoprenoid compounds. Catalyzes the conversion of 4-diphosphocytidyl-2-C-methyl-D-erythritol 2-phosphate (CDP-ME2P) to 2-C-methyl-D-erythritol 2,4-cyclodiphosphate (ME-CPP) with a corresponding release of cytidine 5-monophosphate (CMP). The protein is 2-C-methyl-D-erythritol 2,4-cyclodiphosphate synthase of Klebsiella pneumoniae (strain 342).